The chain runs to 235 residues: 1-(5-phosphoribosyl)-5-[(5-phosphoribosylamino)methylideneamino] imidazole-4-carboxamide isomerase (235 aa).

Asp8 serves as the catalytic Proton acceptor. Asp128 functions as the Proton donor in the catalytic mechanism.

This sequence belongs to the HisA/HisF family.

It localises to the cytoplasm. The catalysed reaction is 1-(5-phospho-beta-D-ribosyl)-5-[(5-phospho-beta-D-ribosylamino)methylideneamino]imidazole-4-carboxamide = 5-[(5-phospho-1-deoxy-D-ribulos-1-ylimino)methylamino]-1-(5-phospho-beta-D-ribosyl)imidazole-4-carboxamide. The protein operates within amino-acid biosynthesis; L-histidine biosynthesis; L-histidine from 5-phospho-alpha-D-ribose 1-diphosphate: step 4/9. The protein is 1-(5-phosphoribosyl)-5-[(5-phosphoribosylamino)methylideneamino] imidazole-4-carboxamide isomerase of Thermus thermophilus (strain ATCC BAA-163 / DSM 7039 / HB27).